A 461-amino-acid polypeptide reads, in one-letter code: Cysteine--tRNA ligase (461 aa).

Cys-30 contacts Zn(2+). The short motif at 32-42 (PTVYSYAHIGN) is the 'HIGH' region element. Zn(2+)-binding residues include Cys-212, His-237, and Glu-241. A 'KMSKS' region motif is present at residues 270-274 (KMSKS). Residue Lys-273 participates in ATP binding.

The protein belongs to the class-I aminoacyl-tRNA synthetase family. Monomer. Zn(2+) is required as a cofactor.

Its subcellular location is the cytoplasm. The enzyme catalyses tRNA(Cys) + L-cysteine + ATP = L-cysteinyl-tRNA(Cys) + AMP + diphosphate. The polypeptide is Cysteine--tRNA ligase (Maricaulis maris (strain MCS10) (Caulobacter maris)).